Reading from the N-terminus, the 655-residue chain is Bifunctional lysine-specific demethylase and histidyl-hydroxylase NO66 (655 aa).

A compositionally biased stretch (polar residues) spans 1-16; sequence MEKVTNSAAAKPQGNN. Disordered regions lie at residues 1–48 and 67–122; these read MEKV…LSDM and EDTD…QGAS. Over residues 76–86 the composition is skewed to low complexity; that stretch reads STSSKEAAAAK. Residues 87–96 are compositionally biased toward basic and acidic residues; the sequence is TADHERRLQA. Ser131 is subject to Phosphoserine. Position 137 is a phosphothreonine (Thr137). Ser138 carries the post-translational modification Phosphoserine. Positions 185 to 210 are disordered; the sequence is KAPEEGNNNNDEKEMSTETSEPHKTD. Basic and acidic residues predominate over residues 194 to 210; it reads NDEKEMSTETSEPHKTD. The JmjC domain maps to 307–452; the sequence is CSIRLLHASA…NLLETLMPMV (146 aa). Fe cation-binding residues include His353, Asp355, and His418.

Belongs to the ROX family. NO66 subfamily. Requires Fe(2+) as cofactor.

The protein localises to the nucleus. The catalysed reaction is N(6),N(6)-dimethyl-L-lysyl(36)-[histone H3] + 2 2-oxoglutarate + 2 O2 = L-lysyl(36)-[histone H3] + 2 formaldehyde + 2 succinate + 2 CO2. Its function is as follows. Oxygenase that can act as both a histone lysine demethylase and a ribosomal histidine hydroxylase. Specifically demethylates 'Lys-4' (H3K4me) and 'Lys-36' (H3K36me) of histone H3, thereby playing a central role in histone code. This Drosophila sechellia (Fruit fly) protein is Bifunctional lysine-specific demethylase and histidyl-hydroxylase NO66.